Here is a 345-residue protein sequence, read N- to C-terminus: Anthranilate phosphoribosyltransferase (345 aa).

Residues Gly80, 83–84 (GD), Thr88, 90–93 (NIST), 108–116 (KHGNRSVSS), and Ser120 contribute to the 5-phospho-alpha-D-ribose 1-diphosphate site. Residue Gly80 participates in anthranilate binding. Ser92 contributes to the Mg(2+) binding site. Asn111 contributes to the anthranilate binding site. Anthranilate is bound at residue Arg166. Residues Asp225 and Glu226 each coordinate Mg(2+).

The protein belongs to the anthranilate phosphoribosyltransferase family. In terms of assembly, homodimer. It depends on Mg(2+) as a cofactor.

The catalysed reaction is N-(5-phospho-beta-D-ribosyl)anthranilate + diphosphate = 5-phospho-alpha-D-ribose 1-diphosphate + anthranilate. The protein operates within amino-acid biosynthesis; L-tryptophan biosynthesis; L-tryptophan from chorismate: step 2/5. Functionally, catalyzes the transfer of the phosphoribosyl group of 5-phosphorylribose-1-pyrophosphate (PRPP) to anthranilate to yield N-(5'-phosphoribosyl)-anthranilate (PRA). The sequence is that of Anthranilate phosphoribosyltransferase from Acetivibrio thermocellus (strain ATCC 27405 / DSM 1237 / JCM 9322 / NBRC 103400 / NCIMB 10682 / NRRL B-4536 / VPI 7372) (Clostridium thermocellum).